A 139-amino-acid polypeptide reads, in one-letter code: Drosulfakinins (139 aa).

The N-terminal stretch at methionine 1–threonine 35 is a signal peptide. The propeptide occupies alanine 36–serine 71. A Phenylalanine amide modification is found at phenylalanine 80. Residues glycine 81–serine 109 constitute a propeptide that is removed on maturation. The residue at position 115 (tyrosine 115) is a Sulfotyrosine. The residue at position 120 (phenylalanine 120) is a Phenylalanine amide. Sulfotyrosine is present on tyrosine 132. The residue at position 137 (phenylalanine 137) is a Phenylalanine amide.

It belongs to the gastrin/cholecystokinin family.

The protein localises to the secreted. In terms of biological role, drosulfakinin-0 (DSK 0) plays diverse biological roles including regulating gut muscle contraction in adults but not in larvae. The protein is Drosulfakinins of Drosophila pseudoobscura pseudoobscura (Fruit fly).